A 437-amino-acid polypeptide reads, in one-letter code: Replication factor C large subunit (437 aa).

48–55 (GPPGVGKT) provides a ligand contact to ATP. Positions 410–437 (TQASKPTSEEKAEKSKKYYPKRSSSRKT) are disordered. A compositionally biased stretch (basic and acidic residues) spans 416 to 425 (TSEEKAEKSK). Positions 426-437 (KYYPKRSSSRKT) are enriched in basic residues.

Belongs to the activator 1 small subunits family. RfcL subfamily. As to quaternary structure, heteromultimer composed of small subunits (RfcS) and large subunits (RfcL).

Functionally, part of the RFC clamp loader complex which loads the PCNA sliding clamp onto DNA. The protein is Replication factor C large subunit of Sulfolobus acidocaldarius (strain ATCC 33909 / DSM 639 / JCM 8929 / NBRC 15157 / NCIMB 11770).